We begin with the raw amino-acid sequence, 278 residues long: Large ribosomal subunit protein uL2 (278 aa).

Disordered regions lie at residues 29–57 and 224–278; these read PEKS…QGGG and VAMN…NKKR. Residues 258-278 are compositionally biased toward basic residues; sequence RSPKKASNKYIVRRRKTNKKR.

This sequence belongs to the universal ribosomal protein uL2 family. Part of the 50S ribosomal subunit. Forms a bridge to the 30S subunit in the 70S ribosome.

Its function is as follows. One of the primary rRNA binding proteins. Required for association of the 30S and 50S subunits to form the 70S ribosome, for tRNA binding and peptide bond formation. It has been suggested to have peptidyltransferase activity; this is somewhat controversial. Makes several contacts with the 16S rRNA in the 70S ribosome. This chain is Large ribosomal subunit protein uL2, found in Streptomyces griseus subsp. griseus (strain JCM 4626 / CBS 651.72 / NBRC 13350 / KCC S-0626 / ISP 5235).